The sequence spans 727 residues: Prolyl endopeptidase-like (727 aa).

Methionine 1 bears the N-acetylmethionine mark. Residues serine 559, aspartate 645, and histidine 690 each act as charge relay system in the active site.

Belongs to the peptidase S9A family. In terms of assembly, homodimer. Interacts with the AP-1 complex. In terms of tissue distribution, expressed in pyramidal neurons of the temporal cortex and neocortex (at protein level). Widely expressed. Expressed at higher level in brain, skeletal muscle, heart and kidney. Expressed at the endplates in the neuromuscular junction.

The protein localises to the cytoplasm. Its subcellular location is the cytosol. It localises to the golgi apparatus. The protein resides in the trans-Golgi network. It is found in the cytoskeleton. The protein localises to the nucleus. With respect to regulation, inhibited by PMSF and Prefabloc, as well as leupeptin at high concentrations. Partially inhibited by TPCK, a chymotrypsin inhibitor and E64, a cysteine protease inhibitor. Not affected by 4-amidinophenyl-methanesulfonyl fluoride (APMSF), pepstatin or EDTA. Inhibited by 1-isobutyl-3-oxo-3,5,6,7-tetrahydro-2H-cyclopenta[c]pyridine-4-carbonitrile. Its function is as follows. Serine peptidase whose precise substrate specificity remains unclear. Does not cleave peptides after a arginine or lysine residue. Regulates trans-Golgi network morphology and sorting by regulating the membrane binding of the AP-1 complex. May play a role in the regulation of synaptic vesicle exocytosis. The chain is Prolyl endopeptidase-like (PREPL) from Homo sapiens (Human).